Consider the following 65-residue polypeptide: Large ribosomal subunit protein bL35 (65 aa).

It belongs to the bacterial ribosomal protein bL35 family.

This is Large ribosomal subunit protein bL35 from Synechococcus sp. (strain CC9605).